We begin with the raw amino-acid sequence, 59 residues long: Sec-independent protein translocase protein TatA 1 (59 aa).

Residues 3 to 23 (FPLPWQLILILLVILVIFGAS) form a helical membrane-spanning segment.

The protein belongs to the TatA/E family. In terms of assembly, forms a complex with TatC.

It localises to the cell inner membrane. In terms of biological role, part of the twin-arginine translocation (Tat) system that transports large folded proteins containing a characteristic twin-arginine motif in their signal peptide across membranes. TatA could form the protein-conducting channel of the Tat system. This is Sec-independent protein translocase protein TatA 1 from Aquifex aeolicus (strain VF5).